Here is a 262-residue protein sequence, read N- to C-terminus: Adenosylcobinamide-GDP ribazoletransferase (262 aa).

4 helical membrane-spanning segments follow: residues 43-63, 121-141, 145-165, and 195-215; these read PLAG…LGAI, VALI…LPLL, GGGV…VWHW, and GVIL…AVLL.

It belongs to the CobS family. It depends on Mg(2+) as a cofactor.

The protein localises to the cell inner membrane. It carries out the reaction alpha-ribazole + adenosylcob(III)inamide-GDP = adenosylcob(III)alamin + GMP + H(+). The enzyme catalyses alpha-ribazole 5'-phosphate + adenosylcob(III)inamide-GDP = adenosylcob(III)alamin 5'-phosphate + GMP + H(+). Its pathway is cofactor biosynthesis; adenosylcobalamin biosynthesis; adenosylcobalamin from cob(II)yrinate a,c-diamide: step 7/7. Its function is as follows. Joins adenosylcobinamide-GDP and alpha-ribazole to generate adenosylcobalamin (Ado-cobalamin). Also synthesizes adenosylcobalamin 5'-phosphate from adenosylcobinamide-GDP and alpha-ribazole 5'-phosphate. This Sinorhizobium medicae (strain WSM419) (Ensifer medicae) protein is Adenosylcobinamide-GDP ribazoletransferase.